The sequence spans 221 residues: MNNQLLHLMHLVSPALPVGAYAYSQGLEYAVDSGWLAEPGKLQQWITGVLEHSVGHLDLPVLLRLYRAWDAAALDEVDRWNDFVRANRETAELLLEDEQLGLALQRLSVSLQTKGADTPLSSPPCFVTQFALAGVRRHIAEEDLLYGFAWSWLENQVAAATKIVPLGQTQAQQTLVAMMEKIPAVCAHALRLQDEELGVGLPALAMASSRHERQYSRLFRS.

The protein belongs to the UreF family. As to quaternary structure, ureD, UreF and UreG form a complex that acts as a GTP-hydrolysis-dependent molecular chaperone, activating the urease apoprotein by helping to assemble the nickel containing metallocenter of UreC. The UreE protein probably delivers the nickel.

Its subcellular location is the cytoplasm. Its function is as follows. Required for maturation of urease via the functional incorporation of the urease nickel metallocenter. This Teredinibacter turnerae (strain ATCC 39867 / T7901) protein is Urease accessory protein UreF.